The sequence spans 117 residues: Large ribosomal subunit protein bL20 (117 aa).

Belongs to the bacterial ribosomal protein bL20 family.

Binds directly to 23S ribosomal RNA and is necessary for the in vitro assembly process of the 50S ribosomal subunit. It is not involved in the protein synthesizing functions of that subunit. The protein is Large ribosomal subunit protein bL20 of Mesomycoplasma hyopneumoniae (strain 232) (Mycoplasma hyopneumoniae).